We begin with the raw amino-acid sequence, 80 residues long: Large ribosomal subunit protein bL31 (80 aa).

4 residues coordinate Zn(2+): Cys-16, Cys-18, Cys-38, and Cys-41.

Belongs to the bacterial ribosomal protein bL31 family. Type A subfamily. In terms of assembly, part of the 50S ribosomal subunit. Zn(2+) serves as cofactor.

Its function is as follows. Binds the 23S rRNA. This Mycobacterium avium (strain 104) protein is Large ribosomal subunit protein bL31.